The sequence spans 827 residues: Glycerol-3-phosphate acyltransferase (827 aa).

Residues 325-330 (CHRSHM) carry the HXXXXD motif motif.

Belongs to the GPAT/DAPAT family.

The protein resides in the cell inner membrane. It catalyses the reaction sn-glycerol 3-phosphate + an acyl-CoA = a 1-acyl-sn-glycero-3-phosphate + CoA. It functions in the pathway phospholipid metabolism; CDP-diacylglycerol biosynthesis; CDP-diacylglycerol from sn-glycerol 3-phosphate: step 1/3. This Shigella dysenteriae serotype 1 (strain Sd197) protein is Glycerol-3-phosphate acyltransferase.